Reading from the N-terminus, the 48-residue chain is DNA-directed RNA polymerase subunit Rpo12 (48 aa).

Residues C6, C9, C26, and C29 each coordinate Zn(2+).

It belongs to the archaeal Rpo12/eukaryotic RPC10 RNA polymerase subunit family. Part of the 13-subunit RNA polymerase. It depends on Zn(2+) as a cofactor.

The protein resides in the cytoplasm. It carries out the reaction RNA(n) + a ribonucleoside 5'-triphosphate = RNA(n+1) + diphosphate. Its function is as follows. DNA-dependent RNA polymerase (RNAP) catalyzes the transcription of DNA into RNA using the four ribonucleoside triphosphates as substrates. The polypeptide is DNA-directed RNA polymerase subunit Rpo12 (Sulfolobus acidocaldarius (strain ATCC 33909 / DSM 639 / JCM 8929 / NBRC 15157 / NCIMB 11770)).